The following is a 573-amino-acid chain: Dihydroxy-acid dehydratase (573 aa).

Cys62 serves as a coordination point for [2Fe-2S] cluster. Asp94 serves as a coordination point for Mg(2+). Position 135 (Cys135) interacts with [2Fe-2S] cluster. Mg(2+) is bound by residues Asp136 and Lys137. Position 137 is an N6-carboxylysine (Lys137). [2Fe-2S] cluster is bound at residue Cys212. Glu463 is a binding site for Mg(2+). The active-site Proton acceptor is the Ser489.

The protein belongs to the IlvD/Edd family. In terms of assembly, homodimer. The cofactor is [2Fe-2S] cluster. Requires Mg(2+) as cofactor.

The catalysed reaction is (2R)-2,3-dihydroxy-3-methylbutanoate = 3-methyl-2-oxobutanoate + H2O. It carries out the reaction (2R,3R)-2,3-dihydroxy-3-methylpentanoate = (S)-3-methyl-2-oxopentanoate + H2O. It participates in amino-acid biosynthesis; L-isoleucine biosynthesis; L-isoleucine from 2-oxobutanoate: step 3/4. It functions in the pathway amino-acid biosynthesis; L-valine biosynthesis; L-valine from pyruvate: step 3/4. Functions in the biosynthesis of branched-chain amino acids. Catalyzes the dehydration of (2R,3R)-2,3-dihydroxy-3-methylpentanoate (2,3-dihydroxy-3-methylvalerate) into 2-oxo-3-methylpentanoate (2-oxo-3-methylvalerate) and of (2R)-2,3-dihydroxy-3-methylbutanoate (2,3-dihydroxyisovalerate) into 2-oxo-3-methylbutanoate (2-oxoisovalerate), the penultimate precursor to L-isoleucine and L-valine, respectively. In Arthrobacter sp. (strain FB24), this protein is Dihydroxy-acid dehydratase.